The primary structure comprises 390 residues: Protein SOSEKI 4 (390 aa).

Positions 22–115 (RMAEVLYVLS…YALKATKRFD (94 aa)) are DIX-like oligomerization domain. Disordered regions lie at residues 210-247 (KSNSGATKRGKASVTPKQCHPSSRPAYWEFSPQGNRTG) and 291-321 (RESNNSESSDDEQPSVQAETHVSKLSKSGGS). Over residues 304 to 321 (PSVQAETHVSKLSKSGGS) the composition is skewed to polar residues.

This sequence belongs to the SOSEKI family. As to quaternary structure, homodimer. Forms long polymer filaments with other SOKs proteins polymers crucial for polar localization and biological activity.

Its subcellular location is the cell membrane. Its function is as follows. SOSEKI proteins locally interpret global polarity cues and can influence cell division orientation to coordinate cell polarization relative to body axes. The sequence is that of Protein SOSEKI 4 from Physcomitrium patens (Spreading-leaved earth moss).